The chain runs to 113 residues: MSSKLPKKSEENLELPTFPASEESLSRSEKLKYVFVRNPFIPLGCLMTVGTFLASGYYIRRENHLMANKFMRYRVMSQGFTLAALAFSVLFIGPPRREAPSNSSGSINSEIKK.

A disordered region spans residues 1-27 (MSSKLPKKSEENLELPTFPASEESLSR). Residues 12–103 (NLELPTFPAS…PPRREAPSNS (92 aa)) form the HIG1 domain. The next 2 membrane-spanning stretches (helical) occupy residues 39-59 (PFIPLGCLMTVGTFLASGYYI) and 75-95 (VMSQGFTLAALAFSVLFIGPP).

The protein resides in the mitochondrion membrane. This Schizosaccharomyces pombe (strain 972 / ATCC 24843) (Fission yeast) protein is HIG1 domain-containing protein C25B8.07c, mitochondrial.